We begin with the raw amino-acid sequence, 187 residues long: Shikimate kinase (187 aa).

14–19 (TSGKST) is an ATP binding site. Ser18 provides a ligand contact to Mg(2+). Asp36, Arg60, and Gly82 together coordinate substrate. Arg120 is a binding site for ATP. Arg147 contacts substrate.

This sequence belongs to the shikimate kinase family. Monomer. It depends on Mg(2+) as a cofactor.

Its subcellular location is the cytoplasm. It carries out the reaction shikimate + ATP = 3-phosphoshikimate + ADP + H(+). Its pathway is metabolic intermediate biosynthesis; chorismate biosynthesis; chorismate from D-erythrose 4-phosphate and phosphoenolpyruvate: step 5/7. In terms of biological role, catalyzes the specific phosphorylation of the 3-hydroxyl group of shikimic acid using ATP as a cosubstrate. The chain is Shikimate kinase from Chloroherpeton thalassium (strain ATCC 35110 / GB-78).